A 1201-amino-acid polypeptide reads, in one-letter code: Vitamin B12-dependent ribonucleotide reductase (1201 aa).

Substrate is bound by residues Ser-153, Ala-198–Cys-199, Gly-230, Asn-482–Glu-486, and Pro-683–Ile-687. Cysteines 199 and 495 form a disulfide. The Proton acceptor role is filled by Asn-482. Residue Cys-484 is the Cysteine radical intermediate of the active site. Residue Glu-486 is the Proton acceptor of the active site. The span at Asp-1100 to Thr-1118 shows a compositional bias: basic and acidic residues. Positions Asp-1100 to Ser-1120 are disordered.

It belongs to the ribonucleoside diphosphate reductase class-2 family. Adenosylcob(III)alamin serves as cofactor.

The catalysed reaction is a 2'-deoxyribonucleoside 5'-diphosphate + [thioredoxin]-disulfide + H2O = a ribonucleoside 5'-diphosphate + [thioredoxin]-dithiol. Its function is as follows. Catalyzes the reduction of ribonucleotides to deoxyribonucleotides. May function to provide a pool of deoxyribonucleotide precursors for DNA repair during oxygen limitation and/or for immediate growth after restoration of oxygen. This is Vitamin B12-dependent ribonucleotide reductase (nrdJ) from Leptospira interrogans serogroup Icterohaemorrhagiae serovar Lai (strain 56601).